A 120-amino-acid polypeptide reads, in one-letter code: NAD(P)H-quinone oxidoreductase subunit 3, chloroplastic (120 aa).

The next 3 membrane-spanning stretches (helical) occupy residues 9-29, 64-84, and 88-108; these read IFWT…WISG, MFAL…PWAM, and VLGV…VVGL.

It belongs to the complex I subunit 3 family. NDH is composed of at least 16 different subunits, 5 of which are encoded in the nucleus.

It is found in the plastid. The protein localises to the chloroplast thylakoid membrane. It carries out the reaction a plastoquinone + NADH + (n+1) H(+)(in) = a plastoquinol + NAD(+) + n H(+)(out). The enzyme catalyses a plastoquinone + NADPH + (n+1) H(+)(in) = a plastoquinol + NADP(+) + n H(+)(out). In terms of biological role, NDH shuttles electrons from NAD(P)H:plastoquinone, via FMN and iron-sulfur (Fe-S) centers, to quinones in the photosynthetic chain and possibly in a chloroplast respiratory chain. The immediate electron acceptor for the enzyme in this species is believed to be plastoquinone. Couples the redox reaction to proton translocation, and thus conserves the redox energy in a proton gradient. The sequence is that of NAD(P)H-quinone oxidoreductase subunit 3, chloroplastic from Agrostis stolonifera (Creeping bentgrass).